The primary structure comprises 315 residues: High mobility group protein hmg-12 (315 aa).

Residues 57–315 (VKNETDSEAV…AIDAFFDGSD (259 aa)) are disordered. Residues 77–86 (ANDSPANTND) are compositionally biased toward polar residues. The a.T hook 1 DNA-binding region spans 118 to 128 (PVKKGRGRPIK). Composition is skewed to low complexity over residues 147 to 160 (AQTPAADTDAIDTA) and 196 to 205 (AADTDAIDTA).

This sequence belongs to the HMGA family.

Its subcellular location is the nucleus. In terms of biological role, transcriptional regulator. Binds to specific sequence motifs in regulatory elements. May recruit transcription factors, or may induce structural changes in chromatin, to thereby modulate embryonic expression of ATP-dependent chaperone cdc-48.1. The polypeptide is High mobility group protein hmg-12 (Caenorhabditis elegans).